Here is a 122-residue protein sequence, read N- to C-terminus: Large ribosomal subunit protein uL14 (122 aa).

The protein belongs to the universal ribosomal protein uL14 family. Part of the 50S ribosomal subunit. Forms a cluster with proteins L3 and L19. In the 70S ribosome, L14 and L19 interact and together make contacts with the 16S rRNA in bridges B5 and B8.

Its function is as follows. Binds to 23S rRNA. Forms part of two intersubunit bridges in the 70S ribosome. This chain is Large ribosomal subunit protein uL14, found in Fusobacterium nucleatum subsp. nucleatum (strain ATCC 25586 / DSM 15643 / BCRC 10681 / CIP 101130 / JCM 8532 / KCTC 2640 / LMG 13131 / VPI 4355).